A 688-amino-acid chain; its full sequence is Translation initiation factor IF-2 (688 aa).

Basic and acidic residues-rich tracts occupy residues 53 to 62 and 86 to 95; these read GKEKSEKTKE and KRDDKNEKVN. The disordered stretch occupies residues 53 to 100; that stretch reads GKEKSEKTKEEDDEIETTAKNPIKESMNNKKSNKRDDKNEKVNTENAE. The region spanning 187–354 is the tr-type G domain; sequence KRSPIITVMG…MILLSSEILE (168 aa). A G1 region spans residues 196–203; the sequence is GHVDHGKT. 196–203 contributes to the GTP binding site; that stretch reads GHVDHGKT. The interval 221-225 is G2; sequence GITQH. A G3 region spans residues 242-245; sequence DTPG. GTP is bound by residues 242–246 and 296–299; these read DTPGH and NKID. The interval 296-299 is G4; that stretch reads NKID. Positions 332–334 are G5; it reads SAH.

Belongs to the TRAFAC class translation factor GTPase superfamily. Classic translation factor GTPase family. IF-2 subfamily.

It is found in the cytoplasm. Its function is as follows. One of the essential components for the initiation of protein synthesis. Protects formylmethionyl-tRNA from spontaneous hydrolysis and promotes its binding to the 30S ribosomal subunits. Also involved in the hydrolysis of GTP during the formation of the 70S ribosomal complex. The protein is Translation initiation factor IF-2 of Clostridium botulinum (strain ATCC 19397 / Type A).